The chain runs to 157 residues: Crossover junction endodeoxyribonuclease RuvC (157 aa).

Active-site residues include Asp-7, Glu-66, and Asp-139. Residues Asp-7, Glu-66, and Asp-139 each coordinate Mg(2+).

Belongs to the RuvC family. In terms of assembly, homodimer which binds Holliday junction (HJ) DNA. The HJ becomes 2-fold symmetrical on binding to RuvC with unstacked arms; it has a different conformation from HJ DNA in complex with RuvA. In the full resolvosome a probable DNA-RuvA(4)-RuvB(12)-RuvC(2) complex forms which resolves the HJ. It depends on Mg(2+) as a cofactor.

It localises to the cytoplasm. The enzyme catalyses Endonucleolytic cleavage at a junction such as a reciprocal single-stranded crossover between two homologous DNA duplexes (Holliday junction).. Functionally, the RuvA-RuvB-RuvC complex processes Holliday junction (HJ) DNA during genetic recombination and DNA repair. Endonuclease that resolves HJ intermediates. Cleaves cruciform DNA by making single-stranded nicks across the HJ at symmetrical positions within the homologous arms, yielding a 5'-phosphate and a 3'-hydroxyl group; requires a central core of homology in the junction. The consensus cleavage sequence is 5'-(A/T)TT(C/G)-3'. Cleavage occurs on the 3'-side of the TT dinucleotide at the point of strand exchange. HJ branch migration catalyzed by RuvA-RuvB allows RuvC to scan DNA until it finds its consensus sequence, where it cleaves and resolves the cruciform DNA. This chain is Crossover junction endodeoxyribonuclease RuvC, found in Helicobacter acinonychis (strain Sheeba).